Consider the following 119-residue polypeptide: Large ribosomal subunit protein uL18 (119 aa).

It belongs to the universal ribosomal protein uL18 family. In terms of assembly, part of the 50S ribosomal subunit; part of the 5S rRNA/L5/L18/L25 subcomplex. Contacts the 5S and 23S rRNAs.

Functionally, this is one of the proteins that bind and probably mediate the attachment of the 5S RNA into the large ribosomal subunit, where it forms part of the central protuberance. In Chlorobaculum tepidum (strain ATCC 49652 / DSM 12025 / NBRC 103806 / TLS) (Chlorobium tepidum), this protein is Large ribosomal subunit protein uL18.